Reading from the N-terminus, the 234-residue chain is Leucyl/phenylalanyl-tRNA--protein transferase (234 aa).

The protein belongs to the L/F-transferase family.

The protein resides in the cytoplasm. The enzyme catalyses N-terminal L-lysyl-[protein] + L-leucyl-tRNA(Leu) = N-terminal L-leucyl-L-lysyl-[protein] + tRNA(Leu) + H(+). It carries out the reaction N-terminal L-arginyl-[protein] + L-leucyl-tRNA(Leu) = N-terminal L-leucyl-L-arginyl-[protein] + tRNA(Leu) + H(+). The catalysed reaction is L-phenylalanyl-tRNA(Phe) + an N-terminal L-alpha-aminoacyl-[protein] = an N-terminal L-phenylalanyl-L-alpha-aminoacyl-[protein] + tRNA(Phe). Functions in the N-end rule pathway of protein degradation where it conjugates Leu, Phe and, less efficiently, Met from aminoacyl-tRNAs to the N-termini of proteins containing an N-terminal arginine or lysine. This chain is Leucyl/phenylalanyl-tRNA--protein transferase, found in Myxococcus xanthus (strain DK1622).